The chain runs to 302 residues: Protoheme IX farnesyltransferase (302 aa).

9 helical membrane passes run 27–47, 53–73, 100–120, 121–141, 149–169, 175–195, 215–235, 237–257, and 273–293; these read VVAL…PGMV, LFGL…NHVI, LVFA…AVNV, LTAV…TVFL, IVWG…AVTG, PLLL…ALAI, VAFT…VSLV, FIIH…GIGF, and AMPT…LLLV.

The protein belongs to the UbiA prenyltransferase family. Protoheme IX farnesyltransferase subfamily.

The protein resides in the cell inner membrane. The enzyme catalyses heme b + (2E,6E)-farnesyl diphosphate + H2O = Fe(II)-heme o + diphosphate. Its pathway is porphyrin-containing compound metabolism; heme O biosynthesis; heme O from protoheme: step 1/1. Functionally, converts heme B (protoheme IX) to heme O by substitution of the vinyl group on carbon 2 of heme B porphyrin ring with a hydroxyethyl farnesyl side group. In Thioalkalivibrio sulfidiphilus (strain HL-EbGR7), this protein is Protoheme IX farnesyltransferase.